The following is a 203-amino-acid chain: Xrcc4-like factor 1 (203 aa).

It belongs to the XRCC4-XLF family. XLF subfamily.

The protein localises to the nucleus. Its function is as follows. Involved in double-strand break repair via non-homologous end joining (NHEJ); the repair of a double-strand break in DNA in which the two broken ends are rejoined with little or no sequence complementarity. Has a role in meiosis. This is Xrcc4-like factor 1 (xlf1) from Schizosaccharomyces pombe (strain 972 / ATCC 24843) (Fission yeast).